The sequence spans 273 residues: SPRY domain-containing SOCS box protein 4 (273 aa).

The region spanning 34–233 (PARLDQLLDM…MRYINGLDPE (200 aa)) is the B30.2/SPRY domain. The SOCS box domain occupies 234–273 (PLPLMDLCRRSIRSALGRQRLRDIGSLPLPQSLKNYLQYQ).

It belongs to the SPSB family. As to quaternary structure, component of the probable ECS(SPSB4) E3 ubiquitin-protein ligase complex which contains CUL5, RNF7/RBX2, Elongin BC complex and SPSB4. Interacts with CUL5; RNF7; ELOB and ELOC. Interacts with MET. Interacts (via B30.2/SPRY domain) with PAWR; this interaction occurs in association with the Elongin BC complex. Interacts with NOS2. Interacts with EPHB2.

The protein resides in the cytoplasm. Its subcellular location is the cytosol. It functions in the pathway protein modification; protein ubiquitination. Its function is as follows. Substrate recognition component of a SCF-like ECS (Elongin BC-CUL2/5-SOCS-box protein) E3 ubiquitin-protein ligase complex which mediates the ubiquitination and subsequent proteasomal degradation of target proteins. Negatively regulates nitric oxide (NO) production and limits cellular toxicity in activated macrophages by mediating the ubiquitination and proteasomal degradation of NOS2. Acts as a bridge which links NOS2 with the ECS E3 ubiquitin ligase complex components ELOC and CUL5. Diminishes EphB2-dependent cell repulsive responses by mediating the ubiquitination and degradation of the EphB2/CTF2. Regulates cellular clock function by mediating ubiquitination and proteasomal degradation of the circadian transcriptional repressor NR1D1. This chain is SPRY domain-containing SOCS box protein 4 (Spsb4), found in Mus musculus (Mouse).